A 351-amino-acid polypeptide reads, in one-letter code: Hydroxymethylglutaryl-CoA synthase (351 aa).

D30 contacts (3S)-3-hydroxy-3-methylglutaryl-CoA. E82 (proton donor/acceptor) is an active-site residue. The (3S)-3-hydroxy-3-methylglutaryl-CoA site is built by C114, S155, T203, and H236. The Acyl-thioester intermediate role is filled by C114. H236 serves as the catalytic Proton donor/acceptor. Residue R241 participates in CoA binding. (3S)-3-hydroxy-3-methylglutaryl-CoA contacts are provided by R245, N268, and S298.

The protein belongs to the thiolase-like superfamily. Archaeal HMG-CoA synthase family. As to quaternary structure, interacts with acetoacetyl-CoA thiolase that catalyzes the precedent step in the pathway and with a DUF35 protein. The acetoacetyl-CoA thiolase/HMG-CoA synthase complex channels the intermediate via a fused CoA-binding site, which allows for efficient coupling of the endergonic thiolase reaction with the exergonic HMGCS reaction.

It carries out the reaction acetoacetyl-CoA + acetyl-CoA + H2O = (3S)-3-hydroxy-3-methylglutaryl-CoA + CoA + H(+). It functions in the pathway metabolic intermediate biosynthesis; (R)-mevalonate biosynthesis; (R)-mevalonate from acetyl-CoA: step 2/3. In terms of biological role, catalyzes the condensation of acetyl-CoA with acetoacetyl-CoA to form 3-hydroxy-3-methylglutaryl-CoA (HMG-CoA). Functions in the mevalonate (MVA) pathway leading to isopentenyl diphosphate (IPP), a key precursor for the biosynthesis of isoprenoid compounds that are building blocks of archaeal membrane lipids. This Pyrobaculum neutrophilum (strain DSM 2338 / JCM 9278 / NBRC 100436 / V24Sta) (Thermoproteus neutrophilus) protein is Hydroxymethylglutaryl-CoA synthase.